We begin with the raw amino-acid sequence, 311 residues long: Probable manganese-dependent inorganic pyrophosphatase (311 aa).

6 residues coordinate Mn(2+): His-9, Asp-13, Asp-15, Asp-75, His-97, and Asp-149.

It belongs to the PPase class C family. It depends on Mn(2+) as a cofactor.

The protein resides in the cytoplasm. It carries out the reaction diphosphate + H2O = 2 phosphate + H(+). The protein is Probable manganese-dependent inorganic pyrophosphatase of Lactobacillus acidophilus (strain ATCC 700396 / NCK56 / N2 / NCFM).